A 607-amino-acid polypeptide reads, in one-letter code: Glutamine--fructose-6-phosphate aminotransferase [isomerizing] (607 aa).

C2 serves as the catalytic Nucleophile; for GATase activity. In terms of domain architecture, Glutamine amidotransferase type-2 spans 2–217 (CGIIGIIGND…DGDWAVLTRN (216 aa)). SIS domains are found at residues 283 to 422 (IGID…ARGA) and 455 to 597 (VCHD…VDQP). Catalysis depends on K602, which acts as the For Fru-6P isomerization activity.

In terms of assembly, homodimer.

The protein resides in the cytoplasm. The catalysed reaction is D-fructose 6-phosphate + L-glutamine = D-glucosamine 6-phosphate + L-glutamate. Catalyzes the first step in hexosamine metabolism, converting fructose-6P into glucosamine-6P using glutamine as a nitrogen source. In Brucella melitensis biotype 1 (strain ATCC 23456 / CCUG 17765 / NCTC 10094 / 16M), this protein is Glutamine--fructose-6-phosphate aminotransferase [isomerizing].